We begin with the raw amino-acid sequence, 489 residues long: Protein nucleotidyltransferase YdiU (489 aa).

8 residues coordinate ATP: glycine 88, glycine 90, arginine 91, lysine 111, aspartate 123, glycine 124, arginine 174, and arginine 181. Aspartate 250 functions as the Proton acceptor in the catalytic mechanism. 2 residues coordinate Mg(2+): asparagine 251 and aspartate 260. Aspartate 260 is an ATP binding site.

The protein belongs to the SELO family. It depends on Mg(2+) as a cofactor. Mn(2+) serves as cofactor.

The catalysed reaction is L-seryl-[protein] + ATP = 3-O-(5'-adenylyl)-L-seryl-[protein] + diphosphate. It catalyses the reaction L-threonyl-[protein] + ATP = 3-O-(5'-adenylyl)-L-threonyl-[protein] + diphosphate. It carries out the reaction L-tyrosyl-[protein] + ATP = O-(5'-adenylyl)-L-tyrosyl-[protein] + diphosphate. The enzyme catalyses L-histidyl-[protein] + UTP = N(tele)-(5'-uridylyl)-L-histidyl-[protein] + diphosphate. The catalysed reaction is L-seryl-[protein] + UTP = O-(5'-uridylyl)-L-seryl-[protein] + diphosphate. It catalyses the reaction L-tyrosyl-[protein] + UTP = O-(5'-uridylyl)-L-tyrosyl-[protein] + diphosphate. Functionally, nucleotidyltransferase involved in the post-translational modification of proteins. It can catalyze the addition of adenosine monophosphate (AMP) or uridine monophosphate (UMP) to a protein, resulting in modifications known as AMPylation and UMPylation. This chain is Protein nucleotidyltransferase YdiU, found in Vibrio cholerae serotype O1 (strain ATCC 39315 / El Tor Inaba N16961).